The chain runs to 293 residues: Bifunctional monothiol glutaredoxin-S16, chloroplastic (293 aa).

A chloroplast-targeting transit peptide spans 1-62; sequence MAAITISSSL…APSRRRSFFI (62 aa). C123 and C219 are disulfide-bonded. The Glutaredoxin domain maps to 194 to 293; that stretch reads EELIDRLVKE…ENGELANILN (100 aa). Position 211 (K211) interacts with glutathione. Residue C219 participates in [2Fe-2S] cluster binding. Glutathione is bound by residues R251, F263, and 276–277; that span reads CD.

It belongs to the glutaredoxin family. CGFS subfamily. As to quaternary structure, [2Fe-2S]-bridged holo-homodimer. Interacts in vitro with SUFE1, BOLA1, BOLA2 and BOLA4. Interacts in vivo only with SUFE1, BOLA1 and BOLA4. Interacts with SBP1.

Its subcellular location is the plastid. The protein resides in the chloroplast. Its activity is regulated as follows. The formation of an intramolecular disulfide bond negatively regulates both the N-terminal endonuclease and the C-terminal glutaredoxin activities. Functionally, may only reduce GSH-thiol disulfides, but not protein disulfides. Participates probably to the maturation of iron-sulfur proteins and to the regulation of the redox state of the BOLA proteins. The GRXS16-BOLA1 heterodimer binds a labile, oxygen sensitive iron-sulfur cluster. Able to cleave linearized DNA in vitro. The chain is Bifunctional monothiol glutaredoxin-S16, chloroplastic from Arabidopsis thaliana (Mouse-ear cress).